A 452-amino-acid chain; its full sequence is Sesamin methylene transferase (452 aa).

Belongs to the GcvT family. As to quaternary structure, homotrimer.

It catalyses the reaction (+)-sesamin + (6S)-5,6,7,8-tetrahydrofolyl-(gamma-L-Glu)(n) = (+)-sesamin monocatechol + (6R)-5,10-methylenetetrahydrofolyl-(gamma-L-Glu)(n). The catalysed reaction is (+)-sesamin monocatechol + (6S)-5,6,7,8-tetrahydrofolyl-(gamma-L-Glu)(n) = (+)-sesamin dicatechol + (6R)-5,10-methylenetetrahydrofolyl-(gamma-L-Glu)(n). Functionally, converts sesamin into sesamin mono- and di-catechol. Catalyzes a ring cleavage to transfer the methylene group to tetrahydrofolate (THF). Also active with (+)-episesamin, (-)-asarinin, sesaminol, (+)-sesamolin and piperine. The chain is Sesamin methylene transferase from Sinomonas sp. (strain No.22).